A 558-amino-acid chain; its full sequence is Armadillo repeat-containing X-linked protein 5 (558 aa).

2 stretches are compositionally biased toward basic and acidic residues: residues 1-14 and 139-156; these read MVDS…RGKA and KSHD…REET. 2 disordered regions span residues 1 to 35 and 139 to 165; these read MVDS…GKTQ and KSHD…SSDE. The ARM 1 repeat unit spans residues 300–339; that stretch reads CKSRGFSLEPKEFDKLVALLKLTKDPFIHEIATMIMGISP. The disordered stretch occupies residues 369 to 388; that stretch reads HPGALSMVDDSSESSEEPKS. ARM repeat units follow at residues 422-461, 463-503, and 520-558; these read IKFE…CLSK, HANT…NINF, and SELI…ILKL.

Belongs to the eutherian X-chromosome-specific Armcx family.

This Homo sapiens (Human) protein is Armadillo repeat-containing X-linked protein 5 (ARMCX5).